The chain runs to 222 residues: V-type ATP synthase subunit D (222 aa).

Belongs to the V-ATPase D subunit family.

Its function is as follows. Produces ATP from ADP in the presence of a proton gradient across the membrane. In Clostridioides difficile (strain 630) (Peptoclostridium difficile), this protein is V-type ATP synthase subunit D.